A 298-amino-acid polypeptide reads, in one-letter code: GTP cyclohydrolase FolE2 (298 aa).

This sequence belongs to the GTP cyclohydrolase IV family.

It carries out the reaction GTP + H2O = 7,8-dihydroneopterin 3'-triphosphate + formate + H(+). The protein operates within cofactor biosynthesis; 7,8-dihydroneopterin triphosphate biosynthesis; 7,8-dihydroneopterin triphosphate from GTP: step 1/1. Functionally, converts GTP to 7,8-dihydroneopterin triphosphate. The polypeptide is GTP cyclohydrolase FolE2 (Xylella fastidiosa (strain 9a5c)).